Consider the following 441-residue polypeptide: ATP-dependent RNA helicase SUB2-1 (441 aa).

Over residues 1-19 the composition is skewed to acidic residues; it reads MSHEGEEDLLEYSDNEQDI. Residues 1–46 are disordered; sequence MSHEGEEDLLEYSDNEQDIQVDASKAAEPSELDATTAEDASNGDAE. The Q motif motif lies at 57 to 85; the sequence is TGFKDFLLKPELARAIIDCGFEHPSEVQQ. The 176-residue stretch at 88-263 folds into the Helicase ATP-binding domain; it reads IPQSIHGTDV…RRFLQNPLEI (176 aa). 101–108 lines the ATP pocket; it reads AKSGLGKT. The short motif at 210 to 213 is the DECD box element; the sequence is DECD. The 146-residue stretch at 291–436 folds into the Helicase C-terminal domain; the sequence is KLAQLLDDLE…EFPEEGIDPS (146 aa).

The protein belongs to the DEAD box helicase family. DECD subfamily.

The protein resides in the nucleus. It catalyses the reaction ATP + H2O = ADP + phosphate + H(+). Functionally, ATP-binding RNA helicase involved in transcription elongation and required for the export of mRNA out of the nucleus. SUB2 also plays a role in pre-mRNA splicing and spliceosome assembly. May be involved in rDNA and telomeric silencing, and maintenance of genome integrity. This chain is ATP-dependent RNA helicase SUB2-1 (SUB2-1), found in Vanderwaltozyma polyspora (strain ATCC 22028 / DSM 70294 / BCRC 21397 / CBS 2163 / NBRC 10782 / NRRL Y-8283 / UCD 57-17) (Kluyveromyces polysporus).